We begin with the raw amino-acid sequence, 410 residues long: Gamma-glutamyl phosphate reductase (410 aa).

It belongs to the gamma-glutamyl phosphate reductase family.

The protein resides in the cytoplasm. It carries out the reaction L-glutamate 5-semialdehyde + phosphate + NADP(+) = L-glutamyl 5-phosphate + NADPH + H(+). It participates in amino-acid biosynthesis; L-proline biosynthesis; L-glutamate 5-semialdehyde from L-glutamate: step 2/2. Its function is as follows. Catalyzes the NADPH-dependent reduction of L-glutamate 5-phosphate into L-glutamate 5-semialdehyde and phosphate. The product spontaneously undergoes cyclization to form 1-pyrroline-5-carboxylate. This is Gamma-glutamyl phosphate reductase from Campylobacter jejuni subsp. jejuni serotype O:23/36 (strain 81-176).